Here is a 293-residue protein sequence, read N- to C-terminus: Aspartate carbamoyltransferase catalytic subunit (293 aa).

Carbamoyl phosphate contacts are provided by Arg50 and Thr51. Lys78 provides a ligand contact to L-aspartate. Arg100, His127, and Gln130 together coordinate carbamoyl phosphate. L-aspartate is bound by residues Arg160 and Arg210. Positions 253 and 254 each coordinate carbamoyl phosphate.

This sequence belongs to the aspartate/ornithine carbamoyltransferase superfamily. ATCase family. Heterododecamer (2C3:3R2) of six catalytic PyrB chains organized as two trimers (C3), and six regulatory PyrI chains organized as three dimers (R2).

The enzyme catalyses carbamoyl phosphate + L-aspartate = N-carbamoyl-L-aspartate + phosphate + H(+). It participates in pyrimidine metabolism; UMP biosynthesis via de novo pathway; (S)-dihydroorotate from bicarbonate: step 2/3. Catalyzes the condensation of carbamoyl phosphate and aspartate to form carbamoyl aspartate and inorganic phosphate, the committed step in the de novo pyrimidine nucleotide biosynthesis pathway. The protein is Aspartate carbamoyltransferase catalytic subunit of Staphylococcus epidermidis (strain ATCC 35984 / DSM 28319 / BCRC 17069 / CCUG 31568 / BM 3577 / RP62A).